Here is a 968-residue protein sequence, read N- to C-terminus: MSERHAALTSLPPILPRLIRRFAVVIVLLWLGFTAFVNLAVPQLEVVGKAHSVSMSPSDAASIQAIKRVGQVFGEFDSDNAVTIVLEGDQPLGGDAHRFYSDLMRKLSADTRHVAHIQDFWGDPLTAAGSQSADDRAAYVVVYLVGNNETEAYDSVHAVRHMVDTTPPPHGVKAYVTGPAALNADQAEAGDKSIAKVTAITSMVIAAMLLVIYRSVITAVLVLIMVGIDLGAIRGFIALLADHNIFSLSTFATNLLVLMAIAASTDYAIFMLGRYHESRYAGEDRETAFYTMFHGTAHVILGSGLTIAGAMYCLSFARLPYFETLGAPIAIGMLVAVLAALTLGPAVLTVGSFFKLFDPKRRMNTRRWRRVGTAIVRWPGPVLAATCLVASIGLLALPSYRTTYDLRKFMPASMPSNVGDAAAGRHFSRARLNPEVLLIETDHDMRNPVDMLVLDKVAKNIYHSPGIEQVKAITRPLGTTIKHTSIPFIISMQGVNSSEQMEFMKDRIDDILVQVAAMNTSIETMHRMYALMGEVIDNTVDMDHLTHDMSDITATLRDHLADFEDFFRPIRSYFYWEKHCFDVPLCWSIRSIFDMFDSVDQLSEKLEYLVKDMDILITLLPQMRAQMPPMISAMTTMRDMMLIWHGTLGAFYKQQARNNKDPGAMGRVFDAAQIDDSFYLPQSAFENPDFKRGLKMFLSPDGKAARFVIALEGDPATPEGISRVEPIKREAREAIKGTPLQGAAIYLGGTAATFKDIREGARYDLLIAGVAAISLILIIMMIITRSVVAAVVIVGTVVLSMGASFGLSVLVWQDILGIELYWMVLAMSVILLLAVGSDYNLLLISRLKEEIGAGLNTGIIRAMAGTGGVVTAAGMVFAVTMSLFVFSDLRIIGQIGTTIGLGLLFDTLVVRSFMTPSIAALLGRWFWWPLRVRPRPASQMLRPFAPRRLVRALLLPSGQHPSATGAHE.

The next 11 membrane-spanning stretches (helical) occupy residues 22 to 42, 204 to 224, 245 to 265, 297 to 317, 328 to 348, 378 to 398, 763 to 783, 787 to 807, 815 to 835, 866 to 886, and 890 to 910; these read FAVV…LAVP, VIAA…LVLI, IFSL…AAST, AHVI…LSFA, PIAI…PAVL, WPGP…LALP, YDLL…MMII, VVAA…SFGL, ILGI…LLAV, TGGV…LFVF, and RIIG…TLVV.

Belongs to the resistance-nodulation-cell division (RND) (TC 2.A.6) family. MmpL subfamily.

It is found in the cell membrane. The chain is Probable transport protein MmpL2 (mmpL2) from Mycobacterium tuberculosis (strain CDC 1551 / Oshkosh).